Reading from the N-terminus, the 367-residue chain is Multifunctional tryptophan biosynthesis protein (367 aa).

Residues 7–201 (NVVMIDNYDS…LNVSGGYWEE (195 aa)) enclose the Glutamine amidotransferase type-1 domain. Residue 58 to 60 (GPG) participates in L-glutamine binding. Catalysis depends on C86, which acts as the Nucleophile; for GATase activity. L-glutamine is bound by residues Q90 and 136–137 (SL). Active-site for GATase activity residues include H175 and E177. Residues 209-367 (RKESILEKIY…TVLLIVKMLS (159 aa)) are indole-3-glycerol phosphate synthase.

In terms of assembly, tetramer of two components I and two components II.

It catalyses the reaction chorismate + L-glutamine = anthranilate + pyruvate + L-glutamate + H(+). The catalysed reaction is 1-(2-carboxyphenylamino)-1-deoxy-D-ribulose 5-phosphate + H(+) = (1S,2R)-1-C-(indol-3-yl)glycerol 3-phosphate + CO2 + H2O. Its pathway is amino-acid biosynthesis; L-tryptophan biosynthesis; L-tryptophan from chorismate: step 1/5. It participates in amino-acid biosynthesis; L-tryptophan biosynthesis; L-tryptophan from chorismate: step 4/5. This is Multifunctional tryptophan biosynthesis protein from Pichia angusta (Yeast).